The sequence spans 318 residues: uncharacterized protein (318 aa).

A disordered region spans residues 19–63 (VPPDARHHEPRPGMTDHPDTGNGIGLTGRPPRAIPDPAPRSSHGP). Over residues 21–37 (PDARHHEPRPGMTDHPD) the composition is skewed to basic and acidic residues. 72 to 79 (QKGGVGKT) contacts ATP.

Belongs to the ParA family.

Functionally, may play a role in septum formation. This is an uncharacterized protein from Mycobacterium tuberculosis (strain CDC 1551 / Oshkosh).